Here is a 298-residue protein sequence, read N- to C-terminus: Protoheme IX farnesyltransferase (298 aa).

The next 9 helical transmembrane spans lie at 26–46, 52–72, 99–119, 120–140, 148–168, 174–194, 219–239, 241–261, and 276–296; these read VVSL…PGVV, IFAT…NCLV, FVFL…LVNP, LTMW…TVIL, IVIG…AVTG, ALLL…ALAL, LHVL…YATQ, SGLI…YYAV, and FRYS…DHYI.

It belongs to the UbiA prenyltransferase family. Protoheme IX farnesyltransferase subfamily.

The protein resides in the cell inner membrane. The enzyme catalyses heme b + (2E,6E)-farnesyl diphosphate + H2O = Fe(II)-heme o + diphosphate. It functions in the pathway porphyrin-containing compound metabolism; heme O biosynthesis; heme O from protoheme: step 1/1. Its function is as follows. Converts heme B (protoheme IX) to heme O by substitution of the vinyl group on carbon 2 of heme B porphyrin ring with a hydroxyethyl farnesyl side group. This chain is Protoheme IX farnesyltransferase, found in Nitrosospira multiformis (strain ATCC 25196 / NCIMB 11849 / C 71).